Reading from the N-terminus, the 418-residue chain is Tryptophan synthase beta chain (418 aa).

The span at 1–12 (MTSTLPTANTPD) shows a compositional bias: polar residues. A disordered region spans residues 1–21 (MTSTLPTANTPDPASLMPSVR). Residue Lys111 is modified to N6-(pyridoxal phosphate)lysine.

The protein belongs to the TrpB family. As to quaternary structure, tetramer of two alpha and two beta chains. The cofactor is pyridoxal 5'-phosphate.

It carries out the reaction (1S,2R)-1-C-(indol-3-yl)glycerol 3-phosphate + L-serine = D-glyceraldehyde 3-phosphate + L-tryptophan + H2O. It participates in amino-acid biosynthesis; L-tryptophan biosynthesis; L-tryptophan from chorismate: step 5/5. In terms of biological role, the beta subunit is responsible for the synthesis of L-tryptophan from indole and L-serine. In Synechococcus sp. (strain CC9311), this protein is Tryptophan synthase beta chain.